The following is a 279-amino-acid chain: Virginiamycin B lyase (279 aa).

His215 is a binding site for substrate. Glu253 lines the Mg(2+) pocket. The active-site Proton acceptor is the His255. Mg(2+) is bound at residue Glu270.

This sequence belongs to the Vgb family. In terms of assembly, monomer. It depends on Mg(2+) as a cofactor.

Its function is as follows. Inactivates the type B streptogramin antibiotics by linearizing the lactone ring at the ester linkage, generating a free phenylglycine carboxylate and converting the threonyl moiety into 2-amino-butenoic acid. The sequence is that of Virginiamycin B lyase from Nocardia farcinica (strain IFM 10152).